The chain runs to 447 residues: GTPase Der (447 aa).

EngA-type G domains follow at residues 3 to 167 (PVIA…HLAD) and 180 to 353 (IRLA…ASAN). GTP-binding positions include 9-16 (GRPNVGKS), 56-60 (DTGGF), 119-122 (NKAE), 186-193 (GRPNVGKS), 233-237 (DTAGL), and 298-301 (NKWD). Positions 354 to 438 (RKMSTPVLTR…PMRIQMKSSH (85 aa)) constitute a KH-like domain.

This sequence belongs to the TRAFAC class TrmE-Era-EngA-EngB-Septin-like GTPase superfamily. EngA (Der) GTPase family. As to quaternary structure, associates with the 50S ribosomal subunit.

In terms of biological role, GTPase that plays an essential role in the late steps of ribosome biogenesis. This is GTPase Der from Polaromonas sp. (strain JS666 / ATCC BAA-500).